Consider the following 208-residue polypeptide: Cytochrome c biogenesis ATP-binding export protein CcmA (208 aa).

The 205-residue stretch at 2–206 (LEAKELTCAR…IRLTAEGRDE (205 aa)) folds into the ABC transporter domain. Position 34-41 (34-41 (GPNGAGKT)) interacts with ATP.

The protein belongs to the ABC transporter superfamily. CcmA exporter (TC 3.A.1.107) family. As to quaternary structure, the complex is composed of two ATP-binding proteins (CcmA) and two transmembrane proteins (CcmB).

The protein resides in the cell inner membrane. The enzyme catalyses heme b(in) + ATP + H2O = heme b(out) + ADP + phosphate + H(+). In terms of biological role, part of the ABC transporter complex CcmAB involved in the biogenesis of c-type cytochromes; once thought to export heme, this seems not to be the case, but its exact role is uncertain. Responsible for energy coupling to the transport system. The polypeptide is Cytochrome c biogenesis ATP-binding export protein CcmA (Tatumella citrea (Pantoea citrea)).